The primary structure comprises 631 residues: Golgin subfamily A member 8R (631 aa).

Residues 1-72 (MAEETQHNKL…REGPTSSATL (72 aa)) are disordered. Over residues 38–50 (TNGSIPETATSGG) the composition is skewed to polar residues. 3 coiled-coil regions span residues 85 to 149 (VLDS…NTDL), 209 to 247 (ELEQSLQDQALLKAQLTQLKESFQQLQLERDECAEHIEG), and 303 to 419 (SEVE…LSLM). Disordered regions lie at residues 422-451 (PGEGHGGEHLDSEGEEAPQPMPSVPEDPES), 502-523 (AKDAALGGGHHQAGAQGGDEGE), and 551-610 (NSAD…QEHP). The span at 507–519 (LGGGHHQAGAQGG) shows a compositional bias: gly residues. Residues 568–577 (AADKHGDLRE) show a composition bias toward basic and acidic residues.

Belongs to the GOLGA8 family.

The chain is Golgin subfamily A member 8R from Homo sapiens (Human).